The primary structure comprises 499 residues: Ubiquitin carboxyl-terminal hydrolase 16 (499 aa).

Positions 53–497 (VGLINRGNDC…YAYMLYYERV (445 aa)) constitute a USP domain. Catalysis depends on Cys-62, which acts as the Nucleophile. Catalysis depends on His-407, which acts as the Proton acceptor.

This sequence belongs to the peptidase C19 family.

It catalyses the reaction Thiol-dependent hydrolysis of ester, thioester, amide, peptide and isopeptide bonds formed by the C-terminal Gly of ubiquitin (a 76-residue protein attached to proteins as an intracellular targeting signal).. The polypeptide is Ubiquitin carboxyl-terminal hydrolase 16 (UBP16) (Saccharomyces cerevisiae (strain ATCC 204508 / S288c) (Baker's yeast)).